Reading from the N-terminus, the 544-residue chain is CTP synthase (544 aa).

The tract at residues 1-267 is amidoligase domain; it reads MAKFVFITGG…AQRVLQILNL (267 aa). Ser13 provides a ligand contact to CTP. Position 13 (Ser13) interacts with UTP. 14–19 is an ATP binding site; it reads SIGKGI. Tyr54 contacts L-glutamine. Asp71 is a binding site for ATP. Positions 71 and 141 each coordinate Mg(2+). Residues 148-150, 188-193, and Lys224 each bind CTP; these read DIE and KTKPTQ. UTP-binding positions include 188–193 and Lys224; that span reads KTKPTQ. In terms of domain architecture, Glutamine amidotransferase type-1 spans 292-534; it reads EIAIVGKYVR…IEAALRSRSR (243 aa). Residue Gly354 coordinates L-glutamine. The active-site Nucleophile; for glutamine hydrolysis is the Cys381. L-glutamine contacts are provided by residues 382-385, Glu405, and Arg462; that span reads LGMQ. Residues His507 and Glu509 contribute to the active site.

It belongs to the CTP synthase family. Homotetramer.

The catalysed reaction is UTP + L-glutamine + ATP + H2O = CTP + L-glutamate + ADP + phosphate + 2 H(+). The enzyme catalyses L-glutamine + H2O = L-glutamate + NH4(+). It carries out the reaction UTP + NH4(+) + ATP = CTP + ADP + phosphate + 2 H(+). It functions in the pathway pyrimidine metabolism; CTP biosynthesis via de novo pathway; CTP from UDP: step 2/2. Allosterically activated by GTP, when glutamine is the substrate; GTP has no effect on the reaction when ammonia is the substrate. The allosteric effector GTP functions by stabilizing the protein conformation that binds the tetrahedral intermediate(s) formed during glutamine hydrolysis. Inhibited by the product CTP, via allosteric rather than competitive inhibition. Functionally, catalyzes the ATP-dependent amination of UTP to CTP with either L-glutamine or ammonia as the source of nitrogen. Regulates intracellular CTP levels through interactions with the four ribonucleotide triphosphates. The chain is CTP synthase from Synechococcus sp. (strain JA-3-3Ab) (Cyanobacteria bacterium Yellowstone A-Prime).